Here is a 108-residue protein sequence, read N- to C-terminus: U-scoloptoxin(16)-Er10a (108 aa).

A signal peptide spans 1–24 (MASFTSFCVLFTFCLLLLAHQARS).

This sequence belongs to the scoloptoxin-16 family. Contains 4 disulfide bonds. Expressed by the venom gland.

The protein localises to the secreted. This is U-scoloptoxin(16)-Er10a from Ethmostigmus rubripes (Giant centipede).